The primary structure comprises 459 residues: Argininosuccinate lyase (459 aa).

Belongs to the lyase 1 family. Argininosuccinate lyase subfamily.

Its subcellular location is the cytoplasm. The enzyme catalyses 2-(N(omega)-L-arginino)succinate = fumarate + L-arginine. The protein operates within amino-acid biosynthesis; L-arginine biosynthesis; L-arginine from L-ornithine and carbamoyl phosphate: step 3/3. The protein is Argininosuccinate lyase of Prochlorococcus marinus (strain MIT 9301).